The chain runs to 125 residues: Conopressin-conophysin, isoform 1 (125 aa).

The signal sequence occupies residues 1-22 (MQMGRPTLLPCLLLLLVLSTQA). An intrachain disulfide couples Cys23 to Cys28. Gly31 carries the glycine amide modification. Positions 32–39 (GKRDVHMI) are excised as a propeptide. Cystine bridges form between Cys45/Cys85, Cys48/Cys59, Cys53/Cys75, Cys60/Cys65, Cys92/Cys112, Cys104/Cys124, and Cys113/Cys118.

The protein belongs to the vasopressin/oxytocin family. As to expression, expressed by the venom gland.

It is found in the secreted. Targets vasopressin-oxytocin related receptors. The polypeptide is Conopressin-conophysin, isoform 1 (Conus monile (Necklace cone)).